The primary structure comprises 332 residues: CAX-interacting protein 4 (332 aa).

The disordered stretch occupies residues 33-59; it reads GYDPYAPTSKEEPKTTQQKTEDPENSY. Basic and acidic residues predominate over residues 41-54; the sequence is SKEEPKTTQQKTED. The segment at 81-98 adopts a CCHC-type zinc-finger fold; it reads GSCKKCGRVGHLTFQCRN. Basic and acidic residues predominate over residues 124–133; that stretch reads IRRGVGKGEV. Positions 124-332 are disordered; that stretch reads IRRGVGKGEV…RKRHHRKERE (209 aa). The segment covering 134–153 has biased composition (acidic residues); sequence EEVSSEEEEESESSDSDVDS. The segment covering 154–163 has biased composition (basic and acidic residues); that stretch reads EMERIIAERF. 2 stretches are compositionally biased toward basic residues: residues 198–214 and 227–236; these read RKRR…HKRR and SKRRKERRGR. Residues 241-250 show a composition bias toward acidic residues; sequence DDSDESEDED. Basic residues-rich tracts occupy residues 254 to 269 and 314 to 332; these read VKRK…RSRR and SSKR…KERE.

In terms of assembly, interacts with CAX1. In terms of tissue distribution, expressed in leaves, stems and roots, and at lower levels in flowers.

The protein localises to the nucleus. In terms of biological role, may regulate CAX1 cation transporter. The chain is CAX-interacting protein 4 (CXIP4) from Arabidopsis thaliana (Mouse-ear cress).